We begin with the raw amino-acid sequence, 391 residues long: Galactarate dehydratase (D-threo-forming) (391 aa).

A substrate-binding site is contributed by R15. Residues D42 and H45 each contribute to the Mg(2+) site. A substrate-binding site is contributed by Y89. Residue Y90 is the Proton donor of the active site. The Proton acceptor role is filled by Y164. Residues D193, E221, and H246 each contribute to the Mg(2+) site. Substrate is bound at residue T296. Residue T297 participates in Mg(2+) binding. R385 provides a ligand contact to substrate.

This sequence belongs to the mandelate racemase/muconate lactonizing enzyme family. It depends on Mg(2+) as a cofactor.

It carries out the reaction galactarate = (2S,3R)-dihydroxy-5-oxohexanedioate + H2O. In terms of biological role, catalyzes the regioselective dehydration of galactarate into 2-keto-D-threo-4,5-dihydroxyadipate ((2S,3R)-dihydroxy-5-oxohexanedioate). Is not active on other acid sugars. The protein is Galactarate dehydratase (D-threo-forming) of Oceanobacillus iheyensis (strain DSM 14371 / CIP 107618 / JCM 11309 / KCTC 3954 / HTE831).